An 853-amino-acid polypeptide reads, in one-letter code: MSAIENFDAHTPMMQQYLRLKAQHPEILLFYRMGDFYELFYDDAKRASQLLDISLTKRGASAGEPIPMAGIPYHAVENYLAKLVNQGESVAICEQIGDPATSKGPVERKVVRIVTPGTISDEALLQERQDNLLAAIWQDSKGFGYATLDISSGRFRLSEPADRETMAAELQRTNPAELLYAEDFAEMSLIEGRRGLRRRPLWEFEIDTARQQLNLQFGTRDLVGFGVENAPRGLCAAGCLLQYAKDTQRTTLPHIRSITMEREQDSIIMDAATRRNLEITQNLAGGAENTLASVLDCTVTPMGSRMLKRWLHMPVRDTRVLLERQQTIGALQDFTAELQPVLRQVGDLERILARLALRTARPRDLARMRHAFQQLPELRAQLETVDSAPVQALREKMGEFAELRDLLERAIIDTPPVLVRDGGVIASGYNEELDEWRALADGATDYLERLEVRERERTGLDTLKVGFNAVHGYYIQISRGQSHLAPINYMRRQTLKNAERYIIPELKEYEDKVLTSKGKALALEKQLYEELFDLLLPHLEALQQSASALAELDVLVNLAERAYTLNYTCPTFIDKPGIRITEGRHPVVEQVLNEPFIANPLNLSPQRRMLIITGPNMGGKSTYMRQTALIALMAYIGSYVPAQKVEIGPIDRIFTRVGAADDLASGRSTFMVEMTETANILHNATEYSLVLMDEIGRGTSTYDGLSLAWACAENLANKIKALTLFATHYFELTQLPEKMEGVANVHLDALEHGDTIAFMHSVQDGAASKSYGLAVAALAGVPKEVIKRARQKLRELESISPNAAATQVDGTQMSLLSVPEETSPAVEALENLDPDSLTPRQALEWIYRLKSLV.

614–621 (GPNMGGKS) contributes to the ATP binding site.

Belongs to the DNA mismatch repair MutS family.

In terms of biological role, this protein is involved in the repair of mismatches in DNA. It is possible that it carries out the mismatch recognition step. This protein has a weak ATPase activity. This is DNA mismatch repair protein MutS from Escherichia coli (strain 55989 / EAEC).